The sequence spans 219 residues: Cytochrome c oxidase assembly protein CtaG (219 aa).

Residues 1 to 13 (MDATDQGKSTSTT) are compositionally biased toward polar residues. Positions 1–24 (MDATDQGKSTSTTAAQAAPGKAAP) are disordered. Residues 1–29 (MDATDQGKSTSTTAAQAAPGKAAPRRGIG) lie on the Cytoplasmic side of the membrane. Over residues 14–24 (AAQAAPGKAAP) the composition is skewed to low complexity. A helical; Signal-anchor for type II membrane protein transmembrane segment spans residues 30 to 52 (RDALVGGICGAVVVLMIGASYAA). Residues 53–219 (VPFYNWFCRA…GEPDKPRGSL (167 aa)) are Periplasmic-facing.

The protein belongs to the COX11/CtaG family.

It localises to the cell inner membrane. Exerts its effect at some terminal stage of cytochrome c oxidase synthesis, probably by being involved in the insertion of the copper B into subunit I. This is Cytochrome c oxidase assembly protein CtaG from Bradyrhizobium sp. (strain ORS 278).